The sequence spans 33 residues: Alpha-amanitin proprotein (33 aa).

Residues 1–10 (MSDINATRLP) constitute a propeptide that is removed on maturation. Ile-11 is subject to (3R,4R)-4,5-dihydroxyisoleucine; in form alpha-amanitin. Position 11 is a (3R,4S)-4-hydroxyisoleucine; in form gamma-amanitin (Ile-11). The segment at residues 11 to 18 (IWGIGCNP) is a cross-link (cyclopeptide (Ile-Pro)). Residues 12–16 (WGIGC) constitute a cross-link (2'-cysteinyl-6'-hydroxytryptophan sulfoxide (Trp-Cys)). At Pro-18 the chain carries 4-hydroxyproline. Positions 19–33 (SVGDEVTALLASGEA) are excised as a propeptide.

The protein belongs to the MSDIN fungal toxin family. In terms of processing, processed by the macrocyclase-peptidase enzyme POPB to yield a toxic cyclic decapeptide. POPB first removes 10 residues from the N-terminus. Conformational trapping of the remaining peptide forces the enzyme to release this intermediate rather than proceed to macrocyclization. The enzyme rebinds the remaining peptide in a different conformation and catalyzes macrocyclization of the N-terminal 8 residues.

In terms of biological role, major toxin belonging to the bicyclic octapeptides amatoxins that acts by binding non-competitively to RNA polymerase II and greatly slowing the elongation of transcripts from target promoters. The chain is Alpha-amanitin proprotein from Amanita rimosa.